The chain runs to 773 residues: Probable C-mannosyltransferase DPY19L2 (773 aa).

The tract at residues 1–45 (MVGPTRSKLREGSSDRPQSSCTGQARRRWSAATMEPQQERSAPQE) is disordered. Over 1–122 (MVGPTRSKLR…ALQMHRFSHR (122 aa)) the chain is Nuclear. A helical membrane pass occupies residues 123-143 (TLFGLAIFVGILHWLHLITLF). Residues 144 to 209 (ENDHHFSHLS…INTVKRFHLY (66 aa)) lie on the Perinuclear space side of the membrane. A helical transmembrane segment spans residues 210 to 230 (PEVVIAYWYRTIIGIMNLFGI). Over 231-256 (ETKTCWNVTRMEPLNEVQSCEGLGDP) the chain is Nuclear. A helical membrane pass occupies residues 257-277 (ACFYIGVIFILNGLMMGLFFI). At 278–311 (YSTYLSGSQLGGLITVACYFFNHGEATRVMWTPP) the chain is on the perinuclear space side. A helical transmembrane segment spans residues 312 to 332 (LRESFSYPFLVLQMYILTIIL). Residues 333-358 (RTSTVHKKHYMALCFSNVAFMLPWQF) are Nuclear-facing. A helical membrane pass occupies residues 359-379 (AQFILFTQIASLFPMYVVGYI). At 380–386 (EPSKFQK) the chain is on the perinuclear space side. The helical transmembrane segment at 387 to 407 (IIYVNMSSVALCFILMFGNSM) threads the bilayer. The Nuclear portion of the chain corresponds to 408 to 437 (YLSSYYSSCLLVTWAIMQKKSKIQKLGGTE). Residues 438-458 (LQFWLIQGCFWWCGTIILKFL) form a helical membrane-spanning segment. The Perinuclear space portion of the chain corresponds to 459 to 507 (TSKICGVSDHIRLSDLIAARILRYTDFDTLIYTCAPEFDFMEQATPLRY). Residues 508–528 (IKTLLLPLILVITYLIFKKIV) traverse the membrane as a helical segment. At 529 to 548 (RDIMCVLYTNTYVRKQLLDN) the chain is on the nuclear side. A helical membrane pass occupies residues 549 to 569 (AELIFHTLQLLAFTGLAILIM). The Perinuclear space portion of the chain corresponds to 570–590 (RLKLFLTPHMCIMASLICSQR). The chain crosses the membrane as a helical span at residues 591 to 611 (LFGWLFCRIHFENVVFGILTM). At 612–773 (MSIQGCANLH…NSMYRVLKIN (162 aa)) the chain is on the nuclear side.

Belongs to the dpy-19 family. In terms of assembly, interacts with FAM209. As to expression, predominantly expressed in testis. Present in testis but absent from epididymal sperm (at protein level).

It localises to the nucleus inner membrane. Its function is as follows. Probable C-mannosyltransferase that mediates C-mannosylation of tryptophan residues on target proteins. Functionally, required during spermatogenesis for sperm head elongation and acrosome formation. Also plays a role in acrosome attachment to the nuclear envelope. The polypeptide is Probable C-mannosyltransferase DPY19L2 (Dpy19l2) (Mus musculus (Mouse)).